A 119-amino-acid polypeptide reads, in one-letter code: Large ribosomal subunit protein uL14 (119 aa).

The protein belongs to the universal ribosomal protein uL14 family. Part of the 50S ribosomal subunit. Forms a cluster with proteins L3 and L19. In the 70S ribosome, L14 and L19 interact and together make contacts with the 16S rRNA in bridges B5 and B8.

Functionally, binds to 23S rRNA. Forms part of two intersubunit bridges in the 70S ribosome. In Ehrlichia chaffeensis (strain ATCC CRL-10679 / Arkansas), this protein is Large ribosomal subunit protein uL14.